The sequence spans 442 residues: Putative ammonium transporter sll1017 (442 aa).

The next 13 helical transmembrane spans lie at 5–25 (NFPL…VGVA), 44–64 (LFLL…AMLE), 81–101 (TFDV…LMYG), 104–124 (PVLG…LDNV), 133–153 (WLFQ…AVMG), 155–175 (MYFK…YPIS), 193–213 (FAGS…AVVV), 240–260 (GVFI…LAFV), 269–289 (MLIA…ALAF), 299–319 (PNLL…TAGC), 325–345 (WSAI…TKLL), 354–374 (VGAW…VGIF), and 386–406 (IVGS…LFYV).

Belongs to the ammonia transporter channel (TC 1.A.11.2) family.

It localises to the cell membrane. In Synechocystis sp. (strain ATCC 27184 / PCC 6803 / Kazusa), this protein is Putative ammonium transporter sll1017.